The chain runs to 332 residues: Galactinol synthase 7 (332 aa).

Lys101 is an active-site residue. Mn(2+) contacts are provided by Asp117, Asp119, and His255.

It belongs to the glycosyltransferase 8 family. Galactosyltransferase subfamily. The cofactor is a divalent metal cation.

The protein localises to the cytoplasm. It carries out the reaction myo-inositol + UDP-alpha-D-galactose = alpha-D-galactosyl-(1-&gt;3)-1D-myo-inositol + UDP + H(+). Functionally, galactinol synthase involved in the biosynthesis of raffinose family oligosaccharides (RFOs) that function as osmoprotectants. May promote plant stress tolerance. This Arabidopsis thaliana (Mouse-ear cress) protein is Galactinol synthase 7 (GOLS7).